We begin with the raw amino-acid sequence, 455 residues long: Guanine/hypoxanthine permease GhxQ (455 aa).

The Cytoplasmic portion of the chain corresponds to 1–31; the sequence is MSGDILQTPDAPKPQGALDNYFKITARGSTV. A helical transmembrane segment spans residues 32-55; sequence RQEVLAGLTTFLAMVYSVIVVPGM. Residues 56-65 are Periplasmic-facing; sequence LGKAGFPPAA. The helical transmembrane segment at 66 to 84 threads the bilayer; that stretch reads VFVATCLVAGFGSLLMGLW. The Cytoplasmic portion of the chain corresponds to 85–86; it reads AN. Residues 87-103 traverse the membrane as a discontinuously helical segment; it reads LPMAIGCAISLTAFTAF. At 104–115 the chain is on the periplasmic side; it reads SLVLGQQISVPV. A helical membrane pass occupies residues 116-135; that stretch reads ALGAVFLMGVIFTAISVTGV. At 136 to 147 the chain is on the cytoplasmic side; that stretch reads RTWILRNLPMGI. The helical transmembrane segment at 148–168 threads the bilayer; the sequence is AHGTGIGIGLFLLLIAANGVG. The Periplasmic portion of the chain corresponds to 169–186; the sequence is MVIKNPIEGLPVALGAFT. Residues 187 to 204 form a helical membrane-spanning segment; it reads SFPVMMSLLGLAVIFGLE. Over 205 to 208 the chain is Cytoplasmic; that stretch reads KCRV. The helical transmembrane segment at 209 to 228 threads the bilayer; that stretch reads PGGILLVIIAISIIGLIFDP. Residues 229-260 are Periplasmic-facing; the sequence is AVKYHGLVAMPSLTGEDGKSLIFSLDIMGALQ. A helical transmembrane segment spans residues 261-289; sequence PTVLPSVLALVMTAVFDATGTIRAVAGQA. The Cytoplasmic segment spans residues 290-302; the sequence is NLLDKDNQIINGG. The chain crosses the membrane as a helical span at residues 303–318; that stretch reads KALTSDSVSSIFSGLV. Residues 319-320 lie on the Periplasmic side of the membrane; that stretch reads GA. A discontinuously helical transmembrane segment spans residues 321–336; the sequence is APAAVYIESAAGTAAG. Residues 337–340 are Cytoplasmic-facing; that stretch reads GKTG. Residues 341–355 form a helical membrane-spanning segment; sequence LTATVVGALFLLILF. Residues 356–366 lie on the Periplasmic side of the membrane; that stretch reads LSPLSFLIPGY. A helical membrane pass occupies residues 367–386; that stretch reads ATAPALMYVGLLMLSNVSKL. Topologically, residues 387–391 are cytoplasmic; sequence DFNDF. The segment at residues 392–427 is an intramembrane region (discontinuously helical); that stretch reads IDAMAGLVCAVFIVLTCNIVTGIMLGFVTLVVGRVF. The Cytoplasmic segment spans residues 428–455; it reads AREWQKLNIGTVIITAALVAFYAGGWAI.

The protein belongs to the nucleobase:cation symporter-2 (NCS2) (TC 2.A.40) family. Azg-like subfamily.

It is found in the cell membrane. In terms of biological role, high-affinity transporter for guanine and hypoxanthine. This chain is Guanine/hypoxanthine permease GhxQ (ghxQ), found in Escherichia coli (strain K12).